Consider the following 510-residue polypeptide: Glycerol kinase (510 aa).

Thr13 is a binding site for ADP. Residues Thr13 and Thr14 each coordinate ATP. Thr13 provides a ligand contact to sn-glycerol 3-phosphate. Arg17 is an ADP binding site. Sn-glycerol 3-phosphate-binding residues include Arg83, Glu84, Tyr135, and Asp255. Positions 83, 84, 135, 255, and 256 each coordinate glycerol. Thr277, Gly321, Gly421, and Asn425 together coordinate ADP. ATP is bound by residues Thr277, Gly321, and Gly421.

The protein belongs to the FGGY kinase family.

The enzyme catalyses glycerol + ATP = sn-glycerol 3-phosphate + ADP + H(+). It functions in the pathway polyol metabolism; glycerol degradation via glycerol kinase pathway; sn-glycerol 3-phosphate from glycerol: step 1/1. Key enzyme in the regulation of glycerol uptake and metabolism. Catalyzes the phosphorylation of glycerol to yield sn-glycerol 3-phosphate. The polypeptide is Glycerol kinase (Haloquadratum walsbyi (strain DSM 16790 / HBSQ001)).